Consider the following 121-residue polypeptide: Centrocin 2 (121 aa).

Residues 1–20 (MMIKIAVVLCAVMATSMVFA) form the signal peptide. A propeptide spanning residues 21–50 (NDVKEQELADLLDLLISEEVSSPDDAVAES) is cleaved from the precursor. Trp-51 and Trp-59 each carry 6'-bromotryptophan. Cys-77 and Cys-112 are oxidised to a cystine. Positions 83–106 (SPQEARAKVLEAFPEMKESDLDEE) are excised as a propeptide. Pyrrolidone carboxylic acid is present on Gln-107. His-119 carries the post-translational modification Histidine amide.

Heterodimer of a light and a heavy chain, probably disulfide-linked.

Its function is as follows. Has antimicrobial activity against Gram-negative bacteria, Gram-positive bacteria and against fungi with minimum inhibitory concentration (MIC) between 0.78 uM and 50 uM. Shows little hemolytic activity at concentrations up to 12.5 uM but &gt;50% lysis at 100 uM. The protein is Centrocin 2 of Echinus esculentus (Sea urchin).